The following is a 155-amino-acid chain: Endoribonuclease YbeY (155 aa).

The Zn(2+) site is built by H116, H120, and H126.

Belongs to the endoribonuclease YbeY family. Requires Zn(2+) as cofactor.

The protein localises to the cytoplasm. Single strand-specific metallo-endoribonuclease involved in late-stage 70S ribosome quality control and in maturation of the 3' terminus of the 16S rRNA. This is Endoribonuclease YbeY from Thermobifida fusca (strain YX).